Consider the following 406-residue polypeptide: Tryptophan synthase beta chain (406 aa).

Lys-99 is modified (N6-(pyridoxal phosphate)lysine).

Belongs to the TrpB family. As to quaternary structure, tetramer of two alpha and two beta chains. It depends on pyridoxal 5'-phosphate as a cofactor.

It catalyses the reaction (1S,2R)-1-C-(indol-3-yl)glycerol 3-phosphate + L-serine = D-glyceraldehyde 3-phosphate + L-tryptophan + H2O. It participates in amino-acid biosynthesis; L-tryptophan biosynthesis; L-tryptophan from chorismate: step 5/5. In terms of biological role, the beta subunit is responsible for the synthesis of L-tryptophan from indole and L-serine. The protein is Tryptophan synthase beta chain of Rhizobium meliloti (strain 1021) (Ensifer meliloti).